Reading from the N-terminus, the 303-residue chain is MEYFYTSQCPDMDHLRSLSVANRWLETDLPLGDDAKDVAALSEPELEFYRFLFAFLSAADDLVNVNLGSLSELFTQKDILHYYIEQECIEVVHSRVYSAIQLMLFRGDAAARERYVRAALRDEAIRRKVEWLDSRVAECASVAEKYLLMILIEGIFFASSFASISYLRTHNLFVVTCQSNDFISRDEAIHTSASCCIYNNYLGDAPRPDEARIHQLFAEAVEIECEFLRARAPRDSLLLDLPAIISYVRYSADRLLQAIGASPLFGAPAPAADFPMALMVAEKHTNFFERRSTNYTGTVVNDL.

Residues Asp60, Glu90, and His93 each coordinate Fe cation. Tyr97 is an active-site residue. The chain crosses the membrane as a helical span at residues Leu147–Leu167. Glu153, Glu187, and His190 together coordinate Fe cation.

It belongs to the ribonucleoside diphosphate reductase small chain family. Heterotetramer composed of a homodimer of the large subunit (R1) and a homodimer of the small subunit (R2). Larger multisubunit protein complex are also active, composed of (R1)n(R2)n. Fe cation is required as a cofactor.

The protein localises to the host membrane. It catalyses the reaction a 2'-deoxyribonucleoside 5'-diphosphate + [thioredoxin]-disulfide + H2O = a ribonucleoside 5'-diphosphate + [thioredoxin]-dithiol. Ribonucleoside-diphosphate reductase holoenzyme provides the precursors necessary for viral DNA synthesis. Allows virus growth in non-dividing cells, as well as reactivation from latency in infected hosts. Catalyzes the biosynthesis of deoxyribonucleotides from the corresponding ribonucleotides. The protein is Ribonucleoside-diphosphate reductase small subunit of Suid herpesvirus 1 (strain Kaplan) (SuHV-1).